A 64-amino-acid polypeptide reads, in one-letter code: Small hydrophobic protein (64 aa).

An interaction with host BCAP31 region spans residues 6–15 (ITIEFSSKFW). A helical membrane pass occupies residues 20 to 40 (LIHMITTIISLLIIISIMTAI). The interaction with small-molecule inhibitor stretch occupies residues 38 to 43 (TAILNK). A glycan (N-linked (GlcNAc...) asparagine; by host) is linked at N52.

It belongs to the orthopneumovirus small hydrophobic protein family. Homopentamer forming a funnel-like pore. Interacts with glycoprotein G; this interaction occurs on the surface of virion particles and infected cells. Interacts with host BCAP31 (via C-terminus); this interaction is direct. In terms of processing, four species of SH have been detected in infected cell cytoplasm: a 7.5 kDa non-glycosylated form (SH0), a 13-15 kDa form that contains one or two N-linked carbohydrate side chains of the high-mannose type (SHg), a 21-30 kDa polylactosaminoglycan-modified form of the protein (SHp), and the isoform generated by alternative translational initiation. Of these different forms, SH0 is by far the most abundant protein detected during virus infection. Tyrosine phosphorylated.

It localises to the virion membrane. The protein resides in the host cell membrane. It is found in the host Golgi apparatus membrane. The protein localises to the host endoplasmic reticulum membrane. Its activity is regulated as follows. Channel activity is inhibited by copper. Also inhibited by small-molecule pyronin B. Functionally, viroporin that forms a homopentameric ion channel displaying low ion selectivity. May play a role in virus morphogenesis and pathogenicity at various stages of the viral life cycle. Accumulates at the membrane of the Golgi apparatus in infected cells and may facilitate virus release by modifying the secretory pathway. May enhance host membrane permeability and disrupt cellular ion homeostasis, which can be sensed as damage-associated molecular patterns/danger signals, triggering NLRP3 inflammasome activation and inflammatory immune response. Also inhibits host TNFA-mediated signaling pathway and may delay apoptosis, allowing time for the virus to replicate. In Homo sapiens (Human), this protein is Small hydrophobic protein (SH).